We begin with the raw amino-acid sequence, 385 residues long: MNPVPAQREYFLDSIRAWLMLLGIPFHISLIYSSHTWHVNSAEPSLWLTLFNDFIHSFRMQVFFVISGYFSYMLFLRYPLKKWWKVRVERVGIPMLTAIPLLTLPQFIMLQYVKGKAESWPGLSLYDKYNTLAWELISHLWFLLVLVVMTTLCVWIFKRIRNNLENSDKTNKKFSMVKLSVIFLCLGIGYAVIRRTIFIVYPPILSNGMFNFIVMQTLFYLPFFILGALAFIFPHLKALFTTPSRGSTLAAALAFVAYLLNQRYGSGDAWMYETESVITMVLGLWMVNVVFSFGHRLLNFQSARVTYFVNASLFIYLVHHPLTLFFGAYITPHITSNWLGFLCGLIFVVGIAIILYEIHLRIPLLKFLFSGKPVVKRENDKAPAR.

The next 10 helical transmembrane spans lie at 17-37 (AWLMLLGIPFHISLIYSSHTW), 60-80 (MQVFFVISGYFSYMLFLRYPL), 91-111 (VGIPMLTAIPLLTLPQFIMLQ), 137-157 (ISHLWFLLVLVVMTTLCVWIF), 173-193 (KFSMVKLSVIFLCLGIGYAVI), 212-232 (FIVMQTLFYLPFFILGALAFI), 245-262 (RGSTLAAALAFVAYLLNQ), 274-294 (TESVITMVLGLWMVNVVFSFG), 311-331 (ASLFIYLVHHPLTLFFGAYIT), and 338-358 (WLGFLCGLIFVVGIAIILYEI).

It belongs to the acyltransferase 3 family. OpgC subfamily.

It localises to the cell membrane. It functions in the pathway glycan metabolism; osmoregulated periplasmic glucan (OPG) biosynthesis. Its function is as follows. Necessary for the succinyl substitution of periplasmic glucans. Could catalyze the transfer of succinyl residues from the cytoplasmic side of the membrane to the nascent glucan backbones on the periplasmic side of the membrane. The polypeptide is Glucans biosynthesis protein C (Escherichia coli O81 (strain ED1a)).